The sequence spans 141 residues: Pancreatic progenitor cell differentiation and proliferation factor-like protein (141 aa).

The segment at 72–141 (DQSACGGNGP…GAPKDTNSPQ (70 aa)) is disordered. The span at 95–105 (SLLQQEESQLL) shows a compositional bias: low complexity. A compositionally biased stretch (polar residues) spans 112-122 (GTVNRFRNSQT).

The protein belongs to the PPDPF family.

This chain is Pancreatic progenitor cell differentiation and proliferation factor-like protein, found in Bos taurus (Bovine).